Here is a 364-residue protein sequence, read N- to C-terminus: Lytic cellulose monooxygenase (364 aa).

The N-terminal stretch at 1 to 34 (MARRSRYISLAAVMATLLSALGVTFLLGQGRAEA) is a signal peptide. Residues H35 and H144 each contribute to the Cu cation site. Positions 35–225 (HGVAMMPGSR…QENFFSCSDV (191 aa)) constitute a Chitin-binding type-4 domain. The tract at residues 234–261 (VTGIRGSGGTPTPTPTPTTPPTTPPPTH) is disordered. A compositionally biased stretch (pro residues) spans 245-260 (TPTPTPTTPPTTPPPT). In terms of domain architecture, CBM2 spans 258 to 364 (PPTHSGSCMA…PVGTIGCVAP (107 aa)).

Cu(2+) serves as cofactor.

The protein resides in the secreted. It carries out the reaction [(1-&gt;4)-beta-D-glucosyl]n+m + reduced acceptor + O2 = [(1-&gt;4)-beta-D-glucosyl]m-1-(1-&gt;4)-D-glucono-1,5-lactone + [(1-&gt;4)-beta-D-glucosyl]n + acceptor + H2O.. It participates in glycan metabolism; cellulose degradation. Functionally, involved in the degradation of lignocellulosic biomass. Catalyzes the oxidative cleavage of glycosidic bonds in cellulosic substrates via a copper-dependent mechanism. Degrades phosphoric acid swollen cellulose (PASC) to oxidized cellooligosaccharides with degrees of polymerization of 4-8. Also shows activity on agricultural fiber paper pulps such as flax pulp. Is not active on chitin. The polypeptide is Lytic cellulose monooxygenase (Streptomyces ambofaciens (strain ATCC 23877 / 3486 / DSM 40053 / JCM 4204 / NBRC 12836 / NRRL B-2516)).